The chain runs to 292 residues: ATP synthase gamma chain (292 aa).

Belongs to the ATPase gamma chain family. F-type ATPases have 2 components, CF(1) - the catalytic core - and CF(0) - the membrane proton channel. CF(1) has five subunits: alpha(3), beta(3), gamma(1), delta(1), epsilon(1). CF(0) has three main subunits: a, b and c.

The protein resides in the cell inner membrane. Functionally, produces ATP from ADP in the presence of a proton gradient across the membrane. The gamma chain is believed to be important in regulating ATPase activity and the flow of protons through the CF(0) complex. The chain is ATP synthase gamma chain from Chlorobaculum tepidum (strain ATCC 49652 / DSM 12025 / NBRC 103806 / TLS) (Chlorobium tepidum).